Reading from the N-terminus, the 270-residue chain is Proteasome subunit beta (270 aa).

The propeptide at 1-47 (MSNRGRLGDAFLRPGSSSFLDFLSDHAPELLPGRSAAAGNAPLAPHA) is removed in mature form; by autocatalysis. Catalysis depends on Thr48, which acts as the Nucleophile.

This sequence belongs to the peptidase T1B family. As to quaternary structure, the 20S proteasome core is composed of 14 alpha and 14 beta subunits that assemble into four stacked heptameric rings, resulting in a barrel-shaped structure. The two inner rings, each composed of seven catalytic beta subunits, are sandwiched by two outer rings, each composed of seven alpha subunits. The catalytic chamber with the active sites is on the inside of the barrel. Has a gated structure, the ends of the cylinder being occluded by the N-termini of the alpha-subunits. Is capped by the proteasome-associated ATPase, ARC.

It is found in the cytoplasm. It carries out the reaction Cleavage of peptide bonds with very broad specificity.. It functions in the pathway protein degradation; proteasomal Pup-dependent pathway. The formation of the proteasomal ATPase ARC-20S proteasome complex, likely via the docking of the C-termini of ARC into the intersubunit pockets in the alpha-rings, may trigger opening of the gate for substrate entry. Interconversion between the open-gate and close-gate conformations leads to a dynamic regulation of the 20S proteasome proteolysis activity. Component of the proteasome core, a large protease complex with broad specificity involved in protein degradation. In Xylanimonas cellulosilytica (strain DSM 15894 / JCM 12276 / CECT 5975 / KCTC 9989 / LMG 20990 / NBRC 107835 / XIL07), this protein is Proteasome subunit beta.